Here is a 465-residue protein sequence, read N- to C-terminus: E3 ubiquitin-protein ligase ORTHRUS-LIKE 1 (465 aa).

The segment at 31-69 (TSLSSPLDRSGDVDPLPVSDESGGSKADESMTDADETKK) is disordered. Residues 109–148 (CSLCNQLPDRPVTILCGHNFCLKCFDKWIDQGNQICATCR) form an RING-type zinc finger. Residues 233-374 (VRNQGVLVGE…FKVCRYLFVR (142 aa)) form the YDG domain. A helical transmembrane segment spans residues 442-462 (MAMTCLLLFVLIILVGSSSIL).

It localises to the nucleus. The protein resides in the membrane. It carries out the reaction S-ubiquitinyl-[E2 ubiquitin-conjugating enzyme]-L-cysteine + [acceptor protein]-L-lysine = [E2 ubiquitin-conjugating enzyme]-L-cysteine + N(6)-ubiquitinyl-[acceptor protein]-L-lysine.. The protein operates within protein modification; protein ubiquitination. In terms of biological role, E3 ubiquitin-protein ligase. May participate in methylation-dependent transcriptional regulation. Mediates ubiquitination with the E2 ubiquitin-conjugating enzyme UBC11. The polypeptide is E3 ubiquitin-protein ligase ORTHRUS-LIKE 1 (ORTHL) (Arabidopsis thaliana (Mouse-ear cress)).